Here is a 311-residue protein sequence, read N- to C-terminus: Methionyl-tRNA formyltransferase (311 aa).

112-115 is a (6S)-5,6,7,8-tetrahydrofolate binding site; it reads SLLP.

Belongs to the Fmt family.

It carries out the reaction L-methionyl-tRNA(fMet) + (6R)-10-formyltetrahydrofolate = N-formyl-L-methionyl-tRNA(fMet) + (6S)-5,6,7,8-tetrahydrofolate + H(+). Its function is as follows. Attaches a formyl group to the free amino group of methionyl-tRNA(fMet). The formyl group appears to play a dual role in the initiator identity of N-formylmethionyl-tRNA by promoting its recognition by IF2 and preventing the misappropriation of this tRNA by the elongation apparatus. This is Methionyl-tRNA formyltransferase from Rhizobium meliloti (strain 1021) (Ensifer meliloti).